The sequence spans 327 residues: DNA-directed RNA polymerase subunit alpha (327 aa).

The segment at 1–233 (MVREKVKVST…NLFIPFLHVE (233 aa)) is alpha N-terminal domain (alpha-NTD). The interval 267-327 (LAFQYIFIDQ…KKILDILEKK (61 aa)) is alpha C-terminal domain (alpha-CTD).

Belongs to the RNA polymerase alpha chain family. In plastids the minimal PEP RNA polymerase catalytic core is composed of four subunits: alpha, beta, beta', and beta''. When a (nuclear-encoded) sigma factor is associated with the core the holoenzyme is formed, which can initiate transcription.

The protein resides in the plastid. It is found in the chloroplast. The enzyme catalyses RNA(n) + a ribonucleoside 5'-triphosphate = RNA(n+1) + diphosphate. DNA-dependent RNA polymerase catalyzes the transcription of DNA into RNA using the four ribonucleoside triphosphates as substrates. In Draba nemorosa (Woodland whitlowgrass), this protein is DNA-directed RNA polymerase subunit alpha.